A 235-amino-acid polypeptide reads, in one-letter code: 2,3,4,5-tetrahydropyridine-2,6-dicarboxylate N-acetyltransferase (235 aa).

It belongs to the transferase hexapeptide repeat family. DapH subfamily.

The enzyme catalyses (S)-2,3,4,5-tetrahydrodipicolinate + acetyl-CoA + H2O = L-2-acetamido-6-oxoheptanedioate + CoA. It participates in amino-acid biosynthesis; L-lysine biosynthesis via DAP pathway; LL-2,6-diaminopimelate from (S)-tetrahydrodipicolinate (acetylase route): step 1/3. Its function is as follows. Catalyzes the transfer of an acetyl group from acetyl-CoA to tetrahydrodipicolinate. The sequence is that of 2,3,4,5-tetrahydropyridine-2,6-dicarboxylate N-acetyltransferase from Exiguobacterium sibiricum (strain DSM 17290 / CCUG 55495 / CIP 109462 / JCM 13490 / 255-15).